Here is a 403-residue protein sequence, read N- to C-terminus: Aspartate aminotransferase, cytoplasmic isozyme 2 (403 aa).

At Met-1 the chain carries N-acetylmethionine. The L-aspartate site is built by Gly-37, Trp-132, and Asn-185. The residue at position 249 (Lys-249) is an N6-(pyridoxal phosphate)lysine. Arg-377 contacts L-aspartate.

The protein belongs to the class-I pyridoxal-phosphate-dependent aminotransferase family. Homodimer. The cofactor is pyridoxal 5'-phosphate.

The protein localises to the cytoplasm. It catalyses the reaction L-aspartate + 2-oxoglutarate = oxaloacetate + L-glutamate. In terms of biological role, important for the metabolism of amino acids and Krebs-cycle related organic acids. In plants, it is involved in nitrogen metabolism and in aspects of carbon and energy metabolism. This Arabidopsis thaliana (Mouse-ear cress) protein is Aspartate aminotransferase, cytoplasmic isozyme 2 (ASP4).